Consider the following 179-residue polypeptide: Large ribosomal subunit protein uL6 (179 aa).

Belongs to the universal ribosomal protein uL6 family. Part of the 50S ribosomal subunit.

Its function is as follows. This protein binds to the 23S rRNA, and is important in its secondary structure. It is located near the subunit interface in the base of the L7/L12 stalk, and near the tRNA binding site of the peptidyltransferase center. This is Large ribosomal subunit protein uL6 from Spiroplasma citri.